Consider the following 637-residue polypeptide: Threonine--tRNA ligase (637 aa).

Positions 1–65 constitute a TGS domain; the sequence is MIAIQLPDGS…EADEALSIIT (65 aa). Residues 246–537 form a catalytic region; it reads DHRKLGRELD…LIEEHAGALP (292 aa). Positions 337, 388, and 514 each coordinate Zn(2+).

The protein belongs to the class-II aminoacyl-tRNA synthetase family. Homodimer. The cofactor is Zn(2+).

The protein localises to the cytoplasm. It carries out the reaction tRNA(Thr) + L-threonine + ATP = L-threonyl-tRNA(Thr) + AMP + diphosphate + H(+). In terms of biological role, catalyzes the attachment of threonine to tRNA(Thr) in a two-step reaction: L-threonine is first activated by ATP to form Thr-AMP and then transferred to the acceptor end of tRNA(Thr). Also edits incorrectly charged L-seryl-tRNA(Thr). In Leptothrix cholodnii (strain ATCC 51168 / LMG 8142 / SP-6) (Leptothrix discophora (strain SP-6)), this protein is Threonine--tRNA ligase.